A 126-amino-acid chain; its full sequence is Protein Wnt-1 (126 aa).

Residue Ser-1 is the site of O-palmitoleoyl serine; by PORCN attachment. Cys-92 and Cys-107 are disulfide-bonded. N-linked (GlcNAc...) asparagine glycosylation is found at Asn-93 and Asn-123.

This sequence belongs to the Wnt family. In terms of processing, palmitoleoylation is required for efficient binding to frizzled receptors. Palmitoleoylation is necessary for proper trafficking to cell surface. Depalmitoleoylated by NOTUM, leading to inhibit Wnt signaling pathway.

The protein localises to the secreted. Its subcellular location is the extracellular space. It is found in the extracellular matrix. Ligand for members of the frizzled family of seven transmembrane receptors. Acts in the canonical Wnt signaling pathway by promoting beta-catenin-dependent transcriptional activation. Plays an essential role in the development of the embryonic brain and central nervous system (CNS). Has a role in osteoblast function, bone development and bone homeostasis. This Pituophis melanoleucus (Pine snake) protein is Protein Wnt-1 (WNT-1).